Reading from the N-terminus, the 244-residue chain is Probable transcriptional regulatory protein Aasi_0624 (244 aa).

The protein belongs to the TACO1 family.

Its subcellular location is the cytoplasm. The polypeptide is Probable transcriptional regulatory protein Aasi_0624 (Amoebophilus asiaticus (strain 5a2)).